Here is a 447-residue protein sequence, read N- to C-terminus: Probable glycine dehydrogenase (decarboxylating) subunit 1 (447 aa).

The protein belongs to the GcvP family. N-terminal subunit subfamily. As to quaternary structure, the glycine cleavage system is composed of four proteins: P, T, L and H. In this organism, the P 'protein' is a heterodimer of two subunits.

The catalysed reaction is N(6)-[(R)-lipoyl]-L-lysyl-[glycine-cleavage complex H protein] + glycine + H(+) = N(6)-[(R)-S(8)-aminomethyldihydrolipoyl]-L-lysyl-[glycine-cleavage complex H protein] + CO2. Functionally, the glycine cleavage system catalyzes the degradation of glycine. The P protein binds the alpha-amino group of glycine through its pyridoxal phosphate cofactor; CO(2) is released and the remaining methylamine moiety is then transferred to the lipoamide cofactor of the H protein. The polypeptide is Probable glycine dehydrogenase (decarboxylating) subunit 1 (Maricaulis maris (strain MCS10) (Caulobacter maris)).